The following is a 238-amino-acid chain: 14-3-3 protein 2 (238 aa).

The protein belongs to the 14-3-3 family.

Probable adapter protein. This Entamoeba histolytica (strain ATCC 30459 / HM-1:IMSS / ABRM) protein is 14-3-3 protein 2.